The chain runs to 522 residues: Glutamate--cysteine ligase, chloroplastic (522 aa).

The N-terminal 45 residues, 1 to 45, are a transit peptide targeting the chloroplast; sequence MALMSQAGSSHCIYSEKMKCISGHSSITSNMEMLKMKDICFGNIS. Cysteines 186 and 406 form a disulfide.

It belongs to the carboxylate-amine ligase family. Glutamate--cysteine ligase type 2 subfamily. As to quaternary structure, homodimer or monomer when oxidized or reduced, respectively. Post-translationally, the Cys-186-Cys-406 disulfide bridge is known to modulate the enzyme activity according to the redox status. The oxidized form constitutes the active enzyme.

Its subcellular location is the plastid. The protein localises to the chloroplast. It carries out the reaction L-cysteine + L-glutamate + ATP = gamma-L-glutamyl-L-cysteine + ADP + phosphate + H(+). It participates in sulfur metabolism; glutathione biosynthesis; glutathione from L-cysteine and L-glutamate: step 1/2. The chain is Glutamate--cysteine ligase, chloroplastic (GSH1) from Nicotiana tabacum (Common tobacco).